The chain runs to 116 residues: Protein Rev (116 aa).

Phosphoserine; by host CK2 is present on residues Ser5 and Ser8. Positions 18–26 are homomultimerization; it reads LIKFLYQSN. Positions 23–49 are disordered; the sequence is YQSNPPPNPEGTRQARRNRRRRWRERQ. A Nuclear localization signal and RNA-binding (RRE) motif is present at residues 34–50; it reads TRQARRNRRRRWRERQR. Over residues 36–47 the composition is skewed to basic residues; it reads QARRNRRRRWRE. The Nuclear export signal and binding to XPO1 signature appears at 73 to 84; that stretch reads LQLPPLERLTLD. Phosphoserine; by host is present on residues Ser92 and Ser99. A disordered region spans residues 92-116; sequence SGTQGVGSPQILVESPTVLESGTKE.

This sequence belongs to the HIV-1 REV protein family. In terms of assembly, homomultimer; when bound to the RRE. Multimeric assembly is essential for activity and may involve XPO1. Binds to human KPNB1, XPO1, TNPO1, RANBP5 and IPO7. Interacts with the viral Integrase. Interacts with human KHDRBS1. Interacts with human NAP1; this interaction decreases Rev multimerization and stimulates its activity. Interacts with human DEAD-box helicases DDX3 and DDX24; these interactions may serve for viral RNA export to the cytoplasm and packaging, respectively. Interacts with human PSIP1; this interaction may inhibit HIV-1 DNA integration by promoting dissociation of the Integrase-LEDGF/p75 complex. Asymmetrically arginine dimethylated at one site by host PRMT6. Methylation impairs the RNA-binding activity and export of viral RNA from the nucleus to the cytoplasm. Post-translationally, phosphorylated by protein kinase CK2. Presence of, and maybe binding to the N-terminus of the regulatory beta subunit of CK2 is necessary for CK2-mediated Rev's phosphorylation.

It localises to the host nucleus. Its subcellular location is the host nucleolus. The protein resides in the host cytoplasm. In terms of biological role, escorts unspliced or incompletely spliced viral pre-mRNAs (late transcripts) out of the nucleus of infected cells. These pre-mRNAs carry a recognition sequence called Rev responsive element (RRE) located in the env gene, that is not present in fully spliced viral mRNAs (early transcripts). This function is essential since most viral proteins are translated from unspliced or partially spliced pre-mRNAs which cannot exit the nucleus by the pathway used by fully processed cellular mRNAs. Rev itself is translated from a fully spliced mRNA that readily exits the nucleus. Rev's nuclear localization signal (NLS) binds directly to KPNB1/Importin beta-1 without previous binding to KPNA1/Importin alpha-1. KPNB1 binds to the GDP bound form of RAN (Ran-GDP) and targets Rev to the nucleus. In the nucleus, the conversion from Ran-GDP to Ran-GTP dissociates Rev from KPNB1 and allows Rev's binding to the RRE in viral pre-mRNAs. Rev multimerization on the RRE via cooperative assembly exposes its nuclear export signal (NES) to the surface. Rev can then form a complex with XPO1/CRM1 and Ran-GTP, leading to nuclear export of the complex. Conversion from Ran-GTP to Ran-GDP mediates dissociation of the Rev/RRE/XPO1/RAN complex, so that Rev can return to the nucleus for a subsequent round of export. Beside KPNB1, also seems to interact with TNPO1/Transportin-1, RANBP5/IPO5 and IPO7/RANBP7 for nuclear import. The nucleoporin-like HRB/RIP is an essential cofactor that probably indirectly interacts with Rev to release HIV RNAs from the perinuclear region to the cytoplasm. In Human immunodeficiency virus type 1 group M subtype B (isolate BRU/LAI) (HIV-1), this protein is Protein Rev.